A 255-amino-acid chain; its full sequence is DNA repair protein RecO (255 aa).

It belongs to the RecO family.

Involved in DNA repair and RecF pathway recombination. The polypeptide is DNA repair protein RecO (Listeria welshimeri serovar 6b (strain ATCC 35897 / DSM 20650 / CCUG 15529 / CIP 8149 / NCTC 11857 / SLCC 5334 / V8)).